A 56-amino-acid chain; its full sequence is Small ribosomal subunit protein uS14A (56 aa).

Positions 21 and 24 each coordinate Zn(2+). S25 is modified (phosphoserine). 2 residues coordinate Zn(2+): C39 and C42.

Belongs to the universal ribosomal protein uS14 family. Component of the small ribosomal subunit (SSU). Mature yeast ribosomes consist of a small (40S) and a large (60S) subunit. The 40S small subunit contains 1 molecule of ribosomal RNA (18S rRNA) and 33 different proteins (encoded by 57 genes). The large 60S subunit contains 3 rRNA molecules (25S, 5.8S and 5S rRNA) and 46 different proteins (encoded by 81 genes). The cofactor is Zn(2+).

The protein localises to the cytoplasm. In terms of biological role, component of the ribosome, a large ribonucleoprotein complex responsible for the synthesis of proteins in the cell. The small ribosomal subunit (SSU) binds messenger RNAs (mRNAs) and translates the encoded message by selecting cognate aminoacyl-transfer RNA (tRNA) molecules. The large subunit (LSU) contains the ribosomal catalytic site termed the peptidyl transferase center (PTC), which catalyzes the formation of peptide bonds, thereby polymerizing the amino acids delivered by tRNAs into a polypeptide chain. The nascent polypeptides leave the ribosome through a tunnel in the LSU and interact with protein factors that function in enzymatic processing, targeting, and the membrane insertion of nascent chains at the exit of the ribosomal tunnel. This Saccharomyces cerevisiae (strain ATCC 204508 / S288c) (Baker's yeast) protein is Small ribosomal subunit protein uS14A.